The following is a 233-amino-acid chain: Ribosomal RNA large subunit methyltransferase E (233 aa).

The S-adenosyl-L-methionine site is built by Gly-80, Trp-82, Asp-108, Asp-124, and Asp-148. Lys-188 serves as the catalytic Proton acceptor.

Belongs to the class I-like SAM-binding methyltransferase superfamily. RNA methyltransferase RlmE family.

It is found in the cytoplasm. It carries out the reaction uridine(2552) in 23S rRNA + S-adenosyl-L-methionine = 2'-O-methyluridine(2552) in 23S rRNA + S-adenosyl-L-homocysteine + H(+). Specifically methylates the uridine in position 2552 of 23S rRNA at the 2'-O position of the ribose in the fully assembled 50S ribosomal subunit. The polypeptide is Ribosomal RNA large subunit methyltransferase E (Ruegeria pomeroyi (strain ATCC 700808 / DSM 15171 / DSS-3) (Silicibacter pomeroyi)).